We begin with the raw amino-acid sequence, 521 residues long: Proactivator polypeptide-like 1 (521 aa).

Positions 1–17 (MLCALLLLPSLLGATRA) are cleaved as a signal peptide. Positions 18 to 59 (SPTSGPQECAKGSTVWCQDLQTAARCGAVGYCQGAVWNKPTA) are excised as a propeptide. The region spanning 19 to 59 (PTSGPQECAKGSTVWCQDLQTAARCGAVGYCQGAVWNKPTA) is the Saposin A-type 1 domain. Saposin B-type domains follow at residues 60-144 (KSLP…EPLQ) and 180-258 (EGAL…EELG). Cystine bridges form between Cys64/Cys140, Cys67/Cys134, and Cys95/Cys107. Positions 146 to 180 (HLATLRPLSKEDTFEAVAPFMANGPLTFHPRQAPE) are excised as a propeptide. 3 disulfide bridges follow: Cys184–Cys254, Cys187–Cys248, and Cys213–Cys224. Asn201 carries N-linked (GlcNAc...) asparagine glycosylation. A propeptide spanning residues 259–288 (APARLTQVVAMDGVPSLELGLPRKQSEMQM) is cleaved from the precursor. Saposin B-type domains are found at residues 290 to 370 (AGVT…GNRR) and 392 to 473 (QGSF…HGPR). 3 disulfides stabilise this stretch: Cys294–Cys366, Cys297–Cys360, and Cys325–Cys336. Asn311 is a glycosylation site (N-linked (GlcNAc...) asparagine). Positions 370 to 391 (RRARAVHDAYAIVPSPEWDAEN) are excised as a propeptide. Intrachain disulfides connect Cys396-Cys469, Cys399-Cys463, and Cys427-Cys438. A propeptide spanning residues 474 to 521 (TPLLGTDQCALGPSFWCRSQEAAKLCNAVQHCQKHVWKEMHLHAGEHA) is cleaved from the precursor. A Saposin A-type 2 domain is found at 475-515 (PLLGTDQCALGPSFWCRSQEAAKLCNAVQHCQKHVWKEMHL).

It localises to the secreted. In terms of biological role, may activate the lysosomal degradation of sphingolipids. In Homo sapiens (Human), this protein is Proactivator polypeptide-like 1 (PSAPL1).